The sequence spans 313 residues: uncharacterized protein (313 aa).

This is an uncharacterized protein from Acanthamoeba polyphaga mimivirus (APMV).